A 156-amino-acid chain; its full sequence is Glycine cleavage system H protein 2, mitochondrial (156 aa).

A mitochondrion-targeting transit peptide spans 1 to 23; it reads MACRLFWASRVASHLRISVAQRG. The Lipoyl-binding domain maps to 47–129; sequence KATFGITDHA…YEQGWIIKVE (83 aa). Lysine 88 bears the N6-lipoyllysine mark. A Phosphoserine modification is found at serine 131.

The protein belongs to the GcvH family. As to quaternary structure, the glycine cleavage system is composed of four proteins: P, T, L and H. The cofactor is (R)-lipoate.

The protein localises to the mitochondrion. In terms of biological role, the glycine decarboxylase (GDC) or glycine cleavage system catalyzes the degradation of glycine. The H protein shuttles the methylamine group of glycine from the P protein to the T protein. The protein is Glycine cleavage system H protein 2, mitochondrial (GDH2) of Arabidopsis thaliana (Mouse-ear cress).